Consider the following 60-residue polypeptide: MGVPRRAKLYEVKDGKVERKNPFCPRCGPGVFMADHGNRYACGRCGYTEFKDQPEPKKKK.

Zn(2+)-binding residues include Cys-24, Cys-27, Cys-42, and Cys-45. The segment at 24-45 (CPRCGPGVFMADHGNRYACGRC) adopts a C4-type zinc-finger fold.

The protein belongs to the eukaryotic ribosomal protein eS31 family. As to quaternary structure, part of the 30S ribosomal subunit. Zn(2+) serves as cofactor.

In Methanopyrus kandleri (strain AV19 / DSM 6324 / JCM 9639 / NBRC 100938), this protein is Small ribosomal subunit protein eS31.